A 364-amino-acid chain; its full sequence is Guanine nucleotide-binding protein alpha-8 subunit (364 aa).

Gly2 carries the N-myristoyl glycine lipid modification. A lipid anchor (S-palmitoyl cysteine) is attached at Cys5. Positions 38 to 364 constitute a G-alpha domain; that stretch reads KILKLLILGP…QHTMQKVGIQ (327 aa). The segment at 41-54 is G1 motif; sequence KLLILGPGESGKST. GTP is bound by residues 46–53, 186–192, 211–215, 280–283, and Ala336; these read GPGESGKS, LKSRVPT, DVGGQ, and NKID. Ser53 and Thr192 together coordinate Mg(2+). The G2 motif stretch occupies residues 184 to 192; the sequence is DILKSRVPT. The segment at 207 to 216 is G3 motif; sequence FKIFDVGGQR. The tract at residues 276–283 is G4 motif; it reads ILFLNKID. Positions 334 to 339 are G5 motif; the sequence is TCATDT.

It belongs to the G-alpha family. As to quaternary structure, g proteins are composed of 3 units; alpha, beta and gamma. The alpha chain contains the guanine nucleotide binding site.

Guanine nucleotide-binding proteins (G proteins) are involved as modulators or transducers in various transmembrane signaling systems. The sequence is that of Guanine nucleotide-binding protein alpha-8 subunit (gpa-8) from Caenorhabditis briggsae.